The sequence spans 326 residues: Probable fructokinase-4 (326 aa).

The protein belongs to the carbohydrate kinase PfkB family.

The catalysed reaction is D-fructose + ATP = D-fructose 6-phosphate + ADP + H(+). Its pathway is glycan biosynthesis; starch biosynthesis. In terms of biological role, may play an important role in maintaining the flux of carbon towards starch formation. This is Probable fructokinase-4 from Arabidopsis thaliana (Mouse-ear cress).